The chain runs to 69 residues: DNA gyrase inhibitor YacG (69 aa).

Zn(2+) contacts are provided by cysteine 7, cysteine 10, cysteine 26, and cysteine 30.

It belongs to the DNA gyrase inhibitor YacG family. As to quaternary structure, interacts with GyrB. Requires Zn(2+) as cofactor.

Inhibits all the catalytic activities of DNA gyrase by preventing its interaction with DNA. Acts by binding directly to the C-terminal domain of GyrB, which probably disrupts DNA binding by the gyrase. The sequence is that of DNA gyrase inhibitor YacG from Shewanella baltica (strain OS223).